The sequence spans 256 residues: Nuclear shuttle protein (256 aa).

The Bipartite nuclear localization signal signature appears at 21 to 42 (NYGFKRTFVVKRGDAKRRQTQV). The short motif at 81–96 (QLCKTQPNRSRSYIKL) is the Nuclear localization signal element. The segment at 150-187 (ELFGARIHSLGNLAVTPALKERFYILHVLKRVISVEKD) is interaction with Arabidopsis thaliana NSI protein.

Belongs to the begomovirus nuclear shuttle protein family. In terms of assembly, binds to single-stranded and double-stranded viral DNA. Interacts with the host nuclear shuttle interacting (NSI) protein. This interaction may allow NSP to recruit NSI monomers to the viral genome and thus regulate nuclear export of viral genome by NSP.

It localises to the host nucleus. The protein localises to the host cytoplasm. The protein resides in the host cell membrane. Binds to the genomic viral ssDNA, shuttles it into and out of the cell nucleus. Begomoviruses use 2 proteins to transport their DNA from cell to cell. The nuclear shuttle protein (NSP) shuttles it between nucleus and cytoplasm and the movement protein (MP) probably transports the DNA-NSP complex to the cell periphery and facilitates movement across the cell wall. The protein is Nuclear shuttle protein of Pepper huasteco yellow vein virus (PHYVV).